The following is a 622-amino-acid chain: Polypeptide N-acetylgalactosaminyltransferase 18 (622 aa).

Residues 1-12 (MVCTRKTKTLVS) are Cytoplasmic-facing. Residues 13-35 (TCVILSGMTNIICLLYVGWVTNY) form a helical; Signal-anchor for type II membrane protein membrane-spanning segment. The Lumenal portion of the chain corresponds to 36–622 (IASVYVRGQE…ITNVLRSLVS (587 aa)). 5 disulfides stabilise this stretch: cysteine 144-cysteine 392, cysteine 383-cysteine 462, cysteine 497-cysteine 513, cysteine 545-cysteine 558, and cysteine 586-cysteine 606. Residue asparagine 146 is glycosylated (N-linked (GlcNAc...) asparagine). Residues 153–267 (LPEVSIVFIF…VGWAEPVLTR (115 aa)) form a catalytic subdomain A region. Aspartate 194 is a substrate binding site. Asparagine 195 carries N-linked (GlcNAc...) asparagine glycosylation. Residues aspartate 251 and histidine 253 each contribute to the Mn(2+) site. An N-linked (GlcNAc...) asparagine glycan is attached at asparagine 320. Residues 324–400 (PIRSPALIGC…PCSRIAHIER (77 aa)) are catalytic subdomain B. Histidine 397 provides a ligand contact to Mn(2+). Substrate is bound by residues arginine 400 and tyrosine 405. One can recognise a Ricin B-type lectin domain in the interval 484–614 (AYGVLQNSLK…KCSGQHWTIT (131 aa)).

This sequence belongs to the glycosyltransferase 2 family. GalNAc-T subfamily. Mn(2+) is required as a cofactor.

It localises to the golgi apparatus membrane. The catalysed reaction is L-seryl-[protein] + UDP-N-acetyl-alpha-D-galactosamine = a 3-O-[N-acetyl-alpha-D-galactosaminyl]-L-seryl-[protein] + UDP + H(+). The enzyme catalyses L-threonyl-[protein] + UDP-N-acetyl-alpha-D-galactosamine = a 3-O-[N-acetyl-alpha-D-galactosaminyl]-L-threonyl-[protein] + UDP + H(+). It participates in protein modification; protein glycosylation. Functionally, catalyzes the initial reaction in O-linked oligosaccharide biosynthesis, the transfer of an N-acetyl-D-galactosamine (GalNAc) residue from UDP-GalNAc to a serine or threonine residue on the protein receptor. This Mus musculus (Mouse) protein is Polypeptide N-acetylgalactosaminyltransferase 18 (Galnt18).